Consider the following 185-residue polypeptide: Ribosome-recycling factor (185 aa).

The protein belongs to the RRF family.

The protein resides in the cytoplasm. Functionally, responsible for the release of ribosomes from messenger RNA at the termination of protein biosynthesis. May increase the efficiency of translation by recycling ribosomes from one round of translation to another. The polypeptide is Ribosome-recycling factor (Clostridioides difficile (strain 630) (Peptoclostridium difficile)).